The primary structure comprises 315 residues: Methionyl-tRNA formyltransferase (315 aa).

Position 113–116 (113–116 (SLLP)) interacts with (6S)-5,6,7,8-tetrahydrofolate.

It belongs to the Fmt family.

It carries out the reaction L-methionyl-tRNA(fMet) + (6R)-10-formyltetrahydrofolate = N-formyl-L-methionyl-tRNA(fMet) + (6S)-5,6,7,8-tetrahydrofolate + H(+). Its function is as follows. Attaches a formyl group to the free amino group of methionyl-tRNA(fMet). The formyl group appears to play a dual role in the initiator identity of N-formylmethionyl-tRNA by promoting its recognition by IF2 and preventing the misappropriation of this tRNA by the elongation apparatus. This chain is Methionyl-tRNA formyltransferase, found in Escherichia coli O45:K1 (strain S88 / ExPEC).